We begin with the raw amino-acid sequence, 1136 residues long: Type I inositol polyphosphate 5-phosphatase 13 (1136 aa).

WD repeat units follow at residues 147–185 (ETQT…EAGC), 205–244 (VTTS…VSHD), 259–297 (AHRG…KSLL), 436–475 (EDTR…RDVN), and 515–552 (SHNE…PLDN). 2 catalytic regions span residues 782–798 (DMVA…FGIT) and 861–876 (KKRI…YRDT). K940 is covalently cross-linked (Glycyl lysine isopeptide (Lys-Gly) (interchain with G-Cter in ubiquitin)). Residues 1104 to 1136 (KNLGGSRRYPTDITRNGSTRPRTEDSVRRGKSR) are disordered. Residues 1124–1136 (PRTEDSVRRGKSR) are compositionally biased toward basic and acidic residues.

The protein belongs to the inositol polyphosphate 5-phosphatase family. In terms of assembly, interacts with KIN10, but not with PHOT1. The cofactor is Mg(2+). In terms of tissue distribution, expressed in young seedlings and flowers. Highly expressed in anther and pollen grains, but not in pistils. Not detected in maturated roots, stems and rosette leaves.

The protein localises to the nucleus. It carries out the reaction 1D-myo-inositol 1,4,5-trisphosphate + H2O = 1D-myo-inositol 1,4-bisphosphate + phosphate. In terms of biological role, converts inositol 1,4,5-trisphosphate (Ins(1,4,5)P3) to inositol 1,4-bisphosphate. Modulates cotyledon vein development through regulating auxin homeostasis. Involved in blue light responses. Decreases the amount of KIN10 degraded by the proteasome under low nutrient conditions. Participates with IP5P12 in the control of Ins(1,4,5)P3/Ca(2+) levels that is crucial for maintaining pollen dormancy and regulating early germination of pollen. May modulate auxin transport by regulating vesicle trafficking and thereby plays a role in root gravitropism. This Arabidopsis thaliana (Mouse-ear cress) protein is Type I inositol polyphosphate 5-phosphatase 13.